The following is a 238-amino-acid chain: Purine nucleoside phosphorylase DeoD-type (238 aa).

His4 is a binding site for a purine D-ribonucleoside. Residues Gly20, Arg24, Arg43, and 87 to 90 (RVGS) each bind phosphate. A purine D-ribonucleoside is bound by residues 179-181 (EME) and 203-204 (SD). The Proton donor role is filled by Asp204.

It belongs to the PNP/UDP phosphorylase family. In terms of assembly, homohexamer; trimer of homodimers.

It catalyses the reaction a purine D-ribonucleoside + phosphate = a purine nucleobase + alpha-D-ribose 1-phosphate. The catalysed reaction is a purine 2'-deoxy-D-ribonucleoside + phosphate = a purine nucleobase + 2-deoxy-alpha-D-ribose 1-phosphate. In terms of biological role, catalyzes the reversible phosphorolytic breakdown of the N-glycosidic bond in the beta-(deoxy)ribonucleoside molecules, with the formation of the corresponding free purine bases and pentose-1-phosphate. The sequence is that of Purine nucleoside phosphorylase DeoD-type from Histophilus somni (strain 2336) (Haemophilus somnus).